Consider the following 377-residue polypeptide: uncharacterized protein (377 aa).

7 helical membrane-spanning segments follow: residues 21–41, 66–86, 163–183, 197–217, 236–256, 292–312, and 339–359; these read WLLA…LVLF, LVTF…FGLG, IGVL…GIVL, AILF…IAII, FYMG…YHIF, VNLI…FLIL, and IYFL…ELLF.

Its subcellular location is the cell membrane. This is an uncharacterized protein from Mycoplasma pneumoniae (strain ATCC 29342 / M129 / Subtype 1) (Mycoplasmoides pneumoniae).